The following is a 420-amino-acid chain: UDP-N-acetylglucosamine 1-carboxyvinyltransferase (420 aa).

22–23 (KN) serves as a coordination point for phosphoenolpyruvate. R94 provides a ligand contact to UDP-N-acetyl-alpha-D-glucosamine. The active-site Proton donor is the C118. A 2-(S-cysteinyl)pyruvic acid O-phosphothioketal modification is found at C118. The UDP-N-acetyl-alpha-D-glucosamine site is built by D307 and I329.

The protein belongs to the EPSP synthase family. MurA subfamily.

It is found in the cytoplasm. It carries out the reaction phosphoenolpyruvate + UDP-N-acetyl-alpha-D-glucosamine = UDP-N-acetyl-3-O-(1-carboxyvinyl)-alpha-D-glucosamine + phosphate. It participates in cell wall biogenesis; peptidoglycan biosynthesis. Its function is as follows. Cell wall formation. Adds enolpyruvyl to UDP-N-acetylglucosamine. The protein is UDP-N-acetylglucosamine 1-carboxyvinyltransferase of Gluconacetobacter diazotrophicus (strain ATCC 49037 / DSM 5601 / CCUG 37298 / CIP 103539 / LMG 7603 / PAl5).